A 145-amino-acid chain; its full sequence is 3-hydroxyacyl-[acyl-carrier-protein] dehydratase FabZ (145 aa).

Histidine 47 is a catalytic residue.

This sequence belongs to the thioester dehydratase family. FabZ subfamily.

It is found in the cytoplasm. It carries out the reaction a (3R)-hydroxyacyl-[ACP] = a (2E)-enoyl-[ACP] + H2O. In terms of biological role, involved in unsaturated fatty acids biosynthesis. Catalyzes the dehydration of short chain beta-hydroxyacyl-ACPs and long chain saturated and unsaturated beta-hydroxyacyl-ACPs. The sequence is that of 3-hydroxyacyl-[acyl-carrier-protein] dehydratase FabZ from Thiobacillus denitrificans (strain ATCC 25259 / T1).